A 101-amino-acid chain; its full sequence is Interleukin-8 (101 aa).

The first 22 residues, 1–22 (MTSKLAVALLAAFLLSAALCEG), serve as a signal peptide directing secretion. A Citrulline modification is found at arginine 27. Cystine bridges form between cysteine 34–cysteine 61 and cysteine 36–cysteine 77.

It belongs to the intercrine alpha (chemokine CxC) family. As to quaternary structure, homodimer. Interacts with TNFAIP6 (via Link domain); this interaction interferes with chemokine binding to glycosaminoglycans. Citrullination at Arg-27 prevents proteolysis, and dampens tissue inflammation, it also enhances leukocytosis, possibly through impaired chemokine clearance from the blood circulation.

It is found in the secreted. In terms of biological role, chemotactic factor that mediates inflammatory response by attracting neutrophils, basophils, and T-cells to clear pathogens and protect the host from infection. Also plays an important role in neutrophil activation. Released in response to an inflammatory stimulus, exerts its effect by binding to the G-protein-coupled receptors CXCR1 and CXCR2, primarily found in neutrophils, monocytes and endothelial cells. G-protein heterotrimer (alpha, beta, gamma subunits) constitutively binds to CXCR1/CXCR2 receptor and activation by IL8 leads to beta and gamma subunits release from Galpha (GNAI2 in neutrophils) and activation of several downstream signaling pathways including PI3K and MAPK pathways. This chain is Interleukin-8 (CXCL8), found in Cercocebus atys (Sooty mangabey).